Here is a 621-residue protein sequence, read N- to C-terminus: Type 2 DNA topoisomerase 6 subunit B (621 aa).

Residues N48, D80, 101 to 102, 111 to 118, and K435 each bind ATP; these read SR and GQQGIGIS.

Belongs to the TOP6B family. Homodimer. Heterotetramer of two Top6A and two Top6B chains.

It carries out the reaction ATP-dependent breakage, passage and rejoining of double-stranded DNA.. Its function is as follows. Relaxes both positive and negative superturns and exhibits a strong decatenase activity. The chain is Type 2 DNA topoisomerase 6 subunit B from Methanosarcina barkeri (strain Fusaro / DSM 804).